The chain runs to 172 residues: Large ribosomal subunit protein bL21m (172 aa).

The transit peptide at 1-20 (MIRNIGSNLMKSSSSILLRN) directs the protein to the mitochondrion.

Belongs to the bacterial ribosomal protein bL21 family.

The protein localises to the mitochondrion. This is Large ribosomal subunit protein bL21m (mrpl21) from Dictyostelium discoideum (Social amoeba).